The primary structure comprises 924 residues: Motility hub protein FimV (924 aa).

A signal peptide spans 1 to 24 (MVRLRTLVRAIAAASVLTSGMAHG). The span at 140-150 (ASAPQAPVSAP) shows a compositional bias: low complexity. 3 disordered regions span residues 140 to 176 (ASAP…SDTY), 237 to 312 (ERSP…KGDS), and 372 to 445 (GQGA…PAPV). The 56-residue stretch at 174–229 (DTYRTVSNDTLWEIAQRNRTDRVSVPQAMLAFQELNPGAFVDGNINRLKSGQVLRI) folds into the LysM domain. The span at 245-256 (SQVQAQNQSWRG) shows a compositional bias: polar residues. Residues 299–312 (KASKGADKGGKGDS) show a composition bias toward basic and acidic residues. Positions 390-417 (AAAQAPAQPGTPAAAAPTPAPAGEAPAA) are enriched in low complexity. Residues 418-443 (PAQPPVAPPPAPVAEKPPAPAVPAPA) are compositionally biased toward pro residues. Residues 464-484 (LWLAVIGGSALLALLVLLMIL) form a helical membrane-spanning segment. A disordered region spans residues 799–858 (DDFDLSLADEPTEPAAPEKGEDSFAAQLDEVSAQLDELASNLDEPKSAAPSFSAEDAAVA).

As to quaternary structure, interacts with FimL. Interacts with DgcP.

The protein localises to the cell inner membrane. Inner membrane hub protein that plays both cAMP-dependent and cAMP-independent roles in twitching motility. Regulates intracellular cyclic AMP (cAMP) levels through the activation of adenylate cyclase CyaB. Plays an essential role in a number of virulence mechanisms including type IV pilus (T4P)-mediated assembly and twitching motility as well as cAMP-dependent virulence gene expression. Also mediates type II secretion (T2S) of lipases and proteases. In addition, mediates the cAMP-independent localization of multiple T4P structural and regulatory components to the cell poles. This role in directing proteins to the cell pole is not restricted to type IV component and involves other proteins such as the diguanylate cyclase DgcP. This chain is Motility hub protein FimV (fimV), found in Pseudomonas aeruginosa (strain UCBPP-PA14).